The sequence spans 805 residues: MSSSCWLLLSLVAVATAQSLIEEKAESFLNKFNQEAEDLSYQSSLASWNYNTNITEENAQKMNEAAAKWSAFYEEQSKIAQNFSLQEIQNATIKRQLKALQQSGSSALSPDKNKQLNTILNTMSTIYSTGKVCNSMNPQECFLLEPGLDEIMATSTDYNRRLWAWEGWRAEVGKQLRPLYEEYVVLKNEMARANNYEDYGDYWRGDYEAEGVEGYNYNRNQLIEDVENTFKEIKPLYEQLHAYVRTKLMEVYPSYISPTGCLPAHLLGDMWGRFWTNLYPLTTPFLQKPNIDVTDAMVNQSWDAERIFKEAEKFFVSVGLPQMTPGFWTNSMLTEPGDDRKVVCHPTAWDLGHGDFRIKMCTKVTMDNFLTAHHEMGHIQYDMAYAKQPFLLRNGANEGFHEAVGEIMSLSAATPKHLKSIGLLPSNFQEDNETEINFLLKQALTIVGTLPFTYMLEKWRWMVFQDKIPREQWTKKWWEMKREIVGVVEPLPHDETYCDPASLFHVSNDYSFIRYYTRTIYQFQFQEALCQAAKHDGPLHKCDISNSTEAGQKLLNMLSLGNSGPWTLALENVVGSRNMDVKPLLNYFQPLFVWLKEQNRNSTVGWSTDWSPYADQSIKVRISLKSALGKNAYEWTDNEMYLFRSSVAYAMREYFSREKNQTVPFGEADVWVSDLKPRVSFNFFVTSPKNVSDIIPRSEVEEAIRMSRGRINDIFGLNDNSLEFLGIYPTLKPPYEPPVTIWLIIFGVVMGTVVVGIVILIVTGIKGRKKKNETKREENPYDSMDIGKGESNAGFQNSDDAQTSF.

The N-terminal stretch at 1 to 17 is a signal peptide; it reads MSSSCWLLLSLVAVATA. Topologically, residues 18–740 are extracellular; that stretch reads QSLIEEKAES…LKPPYEPPVT (723 aa). One can recognise a Peptidase M2 domain in the interval 19 to 607; the sequence is SLIEEKAESF…QNRNSTVGWS (589 aa). 3 N-linked (GlcNAc...) asparagine glycosylation sites follow: Asn53, Asn82, and Asn90. A disulfide bond links Cys133 and Cys141. Arg169 lines the chloride pocket. Residue Arg273 participates in substrate binding. An N-linked (GlcNAc...) asparagine glycan is attached at Asn299. Cys344 and Cys361 are joined by a disulfide. 345–346 is a substrate binding site; the sequence is HP. His374 serves as a coordination point for Zn(2+). The Proton acceptor role is filled by Glu375. 2 residues coordinate Zn(2+): His378 and Glu402. An N-linked (GlcNAc...) asparagine glycan is attached at Asn432. The chloride site is built by Trp477 and Lys481. Residue His505 is the Proton donor of the active site. Tyr515 provides a ligand contact to substrate. Cys530 and Cys542 are joined by a disulfide. Residues Asn546 and Asn601 are each glycosylated (N-linked (GlcNAc...) asparagine). A Collectrin-like domain is found at 614–805; that stretch reads ADQSIKVRIS…QNSDDAQTSF (192 aa). The essential for cleavage by ADAM17 stretch occupies residues 652 to 659; that stretch reads REYFSREK. 2 N-linked (GlcNAc...) asparagine glycosylation sites follow: Asn660 and Asn690. The essential for cleavage by TMPRSS11D and TMPRSS2 stretch occupies residues 697-716; the sequence is RSEVEEAIRMSRGRINDIFG. The chain crosses the membrane as a helical span at residues 741 to 761; that stretch reads IWLIIFGVVMGTVVVGIVILI. At 762–805 the chain is on the cytoplasmic side; it reads VTGIKGRKKKNETKREENPYDSMDIGKGESNAGFQNSDDAQTSF. A disordered region spans residues 771–805; the sequence is KNETKREENPYDSMDIGKGESNAGFQNSDDAQTSF. The LIR signature appears at 778 to 786; the sequence is ENPYDSMDI. Residue Tyr781 is modified to Phosphotyrosine. An Endocytic sorting signal motif is present at residues 781–784; that stretch reads YDSM. Positions 781–785 match the SH2-binding motif; sequence YDSMD. A Phosphoserine modification is found at Ser783. Lys788 participates in a covalent cross-link: Glycyl lysine isopeptide (Lys-Gly) (interchain with G-Cter in ubiquitin). A PTB motif is present at residues 792–795; it reads NAGF. A compositionally biased stretch (polar residues) spans 793–805; that stretch reads AGFQNSDDAQTSF. Residues 803–805 carry the PDZ-binding motif; it reads TSF.

Belongs to the peptidase M2 family. Homodimer. Interacts with the catalytically active form of TMPRSS2. Interacts with SLC6A19; this interaction is essential for expression and function of SLC6A19 in intestine. Interacts with ITGA5:ITGB1. Probably interacts (via endocytic sorting signal motif) with AP2M1; the interaction is inhibited by phosphorylation of Tyr-781. Interacts (via PDZ-binding motif) with NHERF1 (via PDZ domains); the interaction may enhance ACE2 membrane residence. It depends on Zn(2+) as a cofactor. Chloride is required as a cofactor. Post-translationally, glycosylated. Proteolytic cleavage by ADAM17 generates a secreted form. Also cleaved by serine proteases: TMPRSS2, TMPRSS11D and HPN/TMPRSS1. In terms of processing, phosphorylated. Phosphorylation at Tyr-781 probably inhibits interaction with AP2M1 and enables interactions with proteins containing SH2 domains. Post-translationally, ubiquitinated. Ubiquitinated on Lys-788 via 'Lys-48'-linked ubiquitin. 'Lys-48'-linked deubiquitinated by USP50 on the Lys-788; leading to its stabilization. As to expression, expressed in heart, kidney and forebrain. In testis, expression is restricted to Leydig cells. In heart, expressed in endothelial cells from small and large arteries, arterial smooth muscle cells, and myocytes (at protein level). Ubiquitously expressed, with highest levels in ileum, bladder and lung.

It localises to the secreted. The protein resides in the cell membrane. It is found in the cytoplasm. Its subcellular location is the cell projection. The protein localises to the cilium. It localises to the apical cell membrane. The enzyme catalyses angiotensin II + H2O = angiotensin-(1-7) + L-phenylalanine. It catalyses the reaction angiotensin I + H2O = angiotensin-(1-9) + L-leucine. It carries out the reaction bradykinin(1-8) + H2O = bradykinin(1-7) + L-phenylalanine. The catalysed reaction is neurotensin + H2O = neurotensin-(1-12) + L-leucine. The enzyme catalyses kinetensin + H2O = kinetensin-(1-8) + L-leucine. It catalyses the reaction dynorphin A-(1-13) + H2O = dynorphin A-(1-12) + L-lysine. It carries out the reaction apelin-13 + H2O = apelin-12 + L-phenylalanine. The catalysed reaction is [Pyr1]apelin-13 + H2O = [Pyr1]apelin-12 + L-phenylalanine. The enzyme catalyses apelin-17 + H2O = apelin-16 + L-phenylalanine. Activated by chloride and fluoride, but not bromide. Inhibited by MLN-4760, cFP_Leu, and EDTA, but not by the ACE inhibitors linosipril, captopril, enalaprilat. In terms of biological role, essential counter-regulatory carboxypeptidase of the renin-angiotensin hormone system that is a critical regulator of blood volume, systemic vascular resistance, and thus cardiovascular homeostasis. Converts angiotensin I to angiotensin 1-9, a nine-amino acid peptide with anti-hypertrophic effects in cardiomyocytes, and angiotensin II to angiotensin 1-7, which then acts as a beneficial vasodilator and anti-proliferation agent, counterbalancing the actions of the vasoconstrictor angiotensin II. Also removes the C-terminal residue from three other vasoactive peptides, neurotensin, kinetensin, and des-Arg bradykinin, but is not active on bradykinin. Also cleaves other biological peptides, such as apelins, casomorphins and dynorphin A. Plays an important role in amino acid transport by acting as binding partner of amino acid transporter SLC6A19 in intestine, regulating trafficking, expression on the cell surface, and its catalytic activity. In Rattus norvegicus (Rat), this protein is Angiotensin-converting enzyme 2 (Ace2).